Consider the following 217-residue polypeptide: U2 snRNP component ist3 (217 aa).

Positions 31-109 constitute an RRM domain; sequence AYIYIGNLDF…RLVRVDHVAS (79 aa). Disordered stretches follow at residues 119–138 and 154–217; these read PANLVPLGESGSSLSVSTIN and EVEQ…DLDG. The segment covering 128 to 138 has biased composition (polar residues); it reads SGSSLSVSTIN. At S160 the chain carries Phosphoserine. Composition is skewed to basic and acidic residues over residues 161 to 176 and 185 to 198; these read PKDEKDLLDPMRDYIH and HESSDRSDKSDSNR. Residues 199–217 show a composition bias toward basic residues; it reads HSRHHRRHSRSRRHRDLDG.

Belongs to the IST3 family. As to quaternary structure, belongs to the 40S cdc5-associated complex (or cwf complex), a spliceosome sub-complex reminiscent of a late-stage spliceosome composed of the U2, U5 and U6 snRNAs and at least brr2, cdc5, cwf2/prp3, cwf3/syf1, cwf4/syf3, cwf5/ecm2, spp42/cwf6, cwf7/spf27, cwf8, cwf9, cwf10, cwf11, cwf12, prp45/cwf13, cwf14, cwf15, cwf16, cwf17, cwf18, cwf19, cwf20, cwf21, cwf22, cwf23, cwf24, cwf25, cwf26, cyp7/cwf27, cwf28, cwf29/ist3, lea1, msl1, prp5/cwf1, prp10, prp12/sap130, prp17, prp22, sap61, sap62, sap114, sap145, slu7, smb1, smd1, smd3, smf1, smg1 and syf2.

The protein localises to the nucleus. Its function is as follows. Required for pre-mRNA splicing and spliceosome assembly. The protein is U2 snRNP component ist3 (cwf29) of Schizosaccharomyces pombe (strain 972 / ATCC 24843) (Fission yeast).